A 467-amino-acid chain; its full sequence is Stromal membrane-associated protein 1 (467 aa).

Residues 18 to 136 (QLILSKLLRE…KYYDKNAIAI (119 aa)) enclose the Arf-GAP domain. A C4-type zinc finger spans residues 33 to 56 (CADCEAKGPRWASWNIGVFICIRC). A compositionally biased stretch (polar residues) spans 145 to 155 (PLQPLVSSPSL). Disordered stretches follow at residues 145 to 224 (PLQP…LDGP) and 408 to 467 (KFGL…QLWK). Composition is skewed to basic and acidic residues over residues 160–185 (DKNKLEKEKEKKKEEKKREKEPEKPA) and 192–204 (KLQKKDQQLEPKK). Positions 218 to 222 (LLGLD) match the Interaction with clathrin heavy chains motif. Positions 413–438 (QAQQPQWSLSQMNQQMAGMSISSATP) are enriched in polar residues. Positions 446 to 467 (SSTTAGWSGSSSGQTLSTQLWK) are enriched in low complexity.

As to quaternary structure, interacts with ARF6. Interacts with clathrin heavy chains via the clathrin box-like motif. As to expression, detected in bone marrow, adrenal gland, trachea, lymph node, spinal cord, peripheral blood leukocytes, thyroid and stomach.

The protein localises to the cell membrane. Its function is as follows. GTPase activating protein that acts on ARF6. Plays a role in clathrin-dependent endocytosis. May play a role in erythropoiesis. In Homo sapiens (Human), this protein is Stromal membrane-associated protein 1 (SMAP1).